The sequence spans 327 residues: ATP-dependent 6-phosphofructokinase (327 aa).

Gly12 is a binding site for ATP. Residues 22 to 26 and 55 to 60 contribute to the ADP site; these read RGVVR and RYSVSD. Residues 73–74 and 103–106 contribute to the ATP site; these read RF and GDGS. A Mg(2+)-binding site is contributed by Asp104. Position 127–129 (127–129) interacts with substrate; it reads TID. Catalysis depends on Asp129, which acts as the Proton acceptor. Arg156 is a binding site for ADP. Substrate-binding positions include Arg164 and 171 to 173; that span reads MGR. ADP is bound by residues 187–189, Lys213, and 215–217; these read GCE and KKH. Residues Glu224, Arg245, and 251 to 254 contribute to the substrate site; that span reads HIQR.

The protein belongs to the phosphofructokinase type A (PFKA) family. ATP-dependent PFK group I subfamily. Prokaryotic clade 'B1' sub-subfamily. As to quaternary structure, homotetramer. Requires Mg(2+) as cofactor.

The protein resides in the cytoplasm. The catalysed reaction is beta-D-fructose 6-phosphate + ATP = beta-D-fructose 1,6-bisphosphate + ADP + H(+). It participates in carbohydrate degradation; glycolysis; D-glyceraldehyde 3-phosphate and glycerone phosphate from D-glucose: step 3/4. Allosterically activated by ADP and other diphosphonucleosides, and allosterically inhibited by phosphoenolpyruvate. In terms of biological role, catalyzes the phosphorylation of D-fructose 6-phosphate to fructose 1,6-bisphosphate by ATP, the first committing step of glycolysis. This Hamiltonella defensa subsp. Acyrthosiphon pisum (strain 5AT) protein is ATP-dependent 6-phosphofructokinase.